Consider the following 335-residue polypeptide: NADH-quinone oxidoreductase subunit H (335 aa).

Helical transmembrane passes span 15 to 35, 81 to 101, 114 to 134, 154 to 174, 187 to 207, 238 to 258, 270 to 290, and 307 to 327; these read VVKA…LSFV, MIFT…FSII, IGLL…LFAG, VSYE…VGSF, LWFI…GVAV, FFVG…TLFF, QVPF…FILL, and WKFC…IVLY.

The protein belongs to the complex I subunit 1 family. NDH-1 is composed of 13 different subunits. Subunits NuoA, H, J, K, L, M, N constitute the membrane sector of the complex.

It is found in the cell inner membrane. The catalysed reaction is a quinone + NADH + 5 H(+)(in) = a quinol + NAD(+) + 4 H(+)(out). Its function is as follows. NDH-1 shuttles electrons from NADH, via FMN and iron-sulfur (Fe-S) centers, to quinones in the respiratory chain. The immediate electron acceptor for the enzyme in this species is believed to be ubiquinone. Couples the redox reaction to proton translocation (for every two electrons transferred, four hydrogen ions are translocated across the cytoplasmic membrane), and thus conserves the redox energy in a proton gradient. This subunit may bind ubiquinone. In Pseudomonas putida (strain GB-1), this protein is NADH-quinone oxidoreductase subunit H.